We begin with the raw amino-acid sequence, 965 residues long: Collagen alpha-1(I) chain (965 aa).

Residues S1–G21 show a composition bias toward pro residues. The disordered stretch occupies residues S1–P965. A 4-hydroxyproline mark is found at P15, P18, P20, P29, P32, P35, P49, P64, P70, P79, and P85. Residues N52 to E66 are compositionally biased toward basic and acidic residues. K88 bears the 5-hydroxylysine; alternate mark. O-linked (Gal...) hydroxylysine; alternate glycosylation occurs at K88. The residue at position 94 (S94) is a Phosphoserine. Over residues D102 to N118 the composition is skewed to low complexity. P112, P115, P121, P130, P136, P157, P166, P169, P196, P199, P211, P217, P226, P232, P235, and P250 each carry 4-hydroxyproline. Low complexity predominate over residues P136–A154. The span at P156–F168 shows a compositional bias: pro residues. Residues A202 to S241 show a composition bias toward low complexity. K253 is subject to 5-hydroxylysine. A 4-hydroxyproline mark is found at P259, P262, P273, P282, P297, P303, P312, and P318. The span at G307–G327 shows a compositional bias: gly residues. Position 326 is a 5-hydroxylysine (K326). P335, P344, P350, P356, P365, P368, P377, P386, P392, P404, P413, P422, P425, P443, P460, P466, P472, P480, P492, P501, P509, P515, and P524 each carry 4-hydroxyproline. Residues K359–R385 show a composition bias toward low complexity. Positions A394 to P413 are enriched in low complexity. Over residues P472 to P482 the composition is skewed to low complexity. K536 is subject to 5-hydroxylysine. 4-hydroxyproline occurs at positions 542, 557, and 563. Residues S569 to A583 are compositionally biased toward low complexity. S572 bears the Phosphoserine mark. Residues P584, P590, P593, P602, P608, P626, P635, and P644 each carry the 4-hydroxyproline modification. Residues A596–A623 show a composition bias toward low complexity. Residues P625 to P637 are compositionally biased toward pro residues. The residue at position 647 (K647) is a 5-hydroxylysine. Positions S652 to V668 are enriched in low complexity. P656 and P662 each carry 4-hydroxyproline. Position 670 is a 3-hydroxyproline (P670). 16 positions are modified to 4-hydroxyproline: P671, P680, P683, P704, P713, P721, P730, P748, P757, P760, P766, P771, P777, P783, P791, and P797. Positions E697–E706 are enriched in low complexity. Low complexity predominate over residues K718–P730. Over residues K768 to A780 the composition is skewed to pro residues. K806 carries the 5-hydroxylysine modification. Residues S815–V830 show a composition bias toward pro residues. A 4-hydroxyproline mark is found at P818, P821, and P824. Over residues A851–P865 the composition is skewed to low complexity. Residues R866–I880 show a composition bias toward basic and acidic residues. A 5-hydroxylysine modification is found at K869. Residue K881 is modified to 5-hydroxylysine; alternate. K881 carries an O-linked (Gal...) hydroxylysine; alternate glycan. 4-hydroxyproline is present on residues P896, P899, P917, and P932. Residues P899–P932 show a composition bias toward low complexity. P937 is subject to 3-hydroxyproline. P938 carries the 4-hydroxyproline modification. Positions V950–P965 are enriched in pro residues. Position 952 is a 3-hydroxyproline (P952). At P953 the chain carries 4-hydroxyproline. At P955 the chain carries 3-hydroxyproline. P956 is modified (4-hydroxyproline). P958 is subject to 3-hydroxyproline. A 4-hydroxyproline mark is found at P959, P962, and P965.

The protein belongs to the fibrillar collagen family. In terms of assembly, trimers of one alpha 2(I) and two alpha 1(I) chains. Contains mostly 4-hydroxyproline. Proline residues at the third position of the tripeptide repeating unit (G-X-Y) are hydroxylated in some or all of the chains. In terms of processing, contains 3-hydroxyproline at a few sites. This modification occurs on the first proline residue in the sequence motif Gly-Pro-Hyp, where Hyp is 4-hydroxyproline. Post-translationally, lysine residues at the third position of the tripeptide repeating unit (G-X-Y) are 5-hydroxylated in some or all of the chains. O-glycosylated on hydroxylated lysine residues. The O-linked glycan consists of a Glc-Gal disaccharide. In terms of tissue distribution, expressed in bones.

The protein resides in the secreted. It localises to the extracellular space. The protein localises to the extracellular matrix. Its function is as follows. Type I collagen is a member of group I collagen (fibrillar forming collagen). In Scelidotherium sp. (strain SLP-2019) (South American ground sloth), this protein is Collagen alpha-1(I) chain.